The primary structure comprises 97 residues: Integration host factor subunit alpha (97 aa).

The protein belongs to the bacterial histone-like protein family. Heterodimer of an alpha and a beta chain.

Functionally, this protein is one of the two subunits of integration host factor, a specific DNA-binding protein that functions in genetic recombination as well as in transcriptional and translational control. This chain is Integration host factor subunit alpha, found in Acinetobacter baylyi (strain ATCC 33305 / BD413 / ADP1).